Consider the following 197-residue polypeptide: dITP/XTP pyrophosphatase (197 aa).

A substrate-binding site is contributed by 8–13 (TGNAGK). The Mg(2+) site is built by E40 and D69. Residue D69 is the Proton acceptor of the active site. Substrate-binding positions include S70, 154 to 157 (FGYD), K177, and 182 to 183 (HR).

Belongs to the HAM1 NTPase family. Homodimer. The cofactor is Mg(2+).

It catalyses the reaction XTP + H2O = XMP + diphosphate + H(+). The enzyme catalyses dITP + H2O = dIMP + diphosphate + H(+). The catalysed reaction is ITP + H2O = IMP + diphosphate + H(+). Functionally, pyrophosphatase that catalyzes the hydrolysis of nucleoside triphosphates to their monophosphate derivatives, with a high preference for the non-canonical purine nucleotides XTP (xanthosine triphosphate), dITP (deoxyinosine triphosphate) and ITP. Seems to function as a house-cleaning enzyme that removes non-canonical purine nucleotides from the nucleotide pool, thus preventing their incorporation into DNA/RNA and avoiding chromosomal lesions. The polypeptide is dITP/XTP pyrophosphatase (rdgB) (Shigella flexneri).